Consider the following 244-residue polypeptide: MRRSTSNGAVVVPATQDGLFHDSPFPIPDSRLIAGVDEAGRGPLAGPVAVAAVVFDPGKPRINGLDDSKQLTAERREQLYARIVDRALAWSVVLIDSEEIDRINIYQATMLGMRRAVEGVAHVAGFARIDGNRVPKGLPCPAEALIGGDALDRAIMAASIVAKVTRDRLMHELHTRHPEYRFDQHKGYSTPVHLAALQTHGPCPQHRRSFAPVRLALQGREGLEPDPGTRDLEQLQVGQLVAPL.

The RNase H type-2 domain maps to 31-222 (RLIAGVDEAG…VRLALQGREG (192 aa)). The a divalent metal cation site is built by D37, E38, and D130.

The protein belongs to the RNase HII family. It depends on Mn(2+) as a cofactor. The cofactor is Mg(2+).

The protein resides in the cytoplasm. It carries out the reaction Endonucleolytic cleavage to 5'-phosphomonoester.. Endonuclease that specifically degrades the RNA of RNA-DNA hybrids. The protein is Ribonuclease HII of Xanthomonas axonopodis pv. citri (strain 306).